A 131-amino-acid polypeptide reads, in one-letter code: Torsin-1A-interacting protein 2, isoform IFRG15 (131 aa).

This chain is Torsin-1A-interacting protein 2, isoform IFRG15 (TOR1AIP2), found in Homo sapiens (Human).